The following is an 85-amino-acid chain: 4-hydroxyphenylacetate decarboxylase small subunit (85 aa).

Residues H4, C7, C20, C34, C43, C46, C60, and C78 each contribute to the [4Fe-4S] cluster site.

This sequence belongs to the HPA decarboxylase small subunit family. Heterooctamer consisting of 4 large (HpdB) subunits and 4 small (HpdC) subunits, arranged as a tetramer of heterodimers. It depends on [4Fe-4S] cluster as a cofactor.

The enzyme catalyses 4-hydroxyphenylacetate + H(+) = 4-methylphenol + CO2. It carries out the reaction 3,4-dihydroxyphenylacetate + H(+) = 4-methylcatechol + CO2. Functionally, component of the HPA decarboxylase that decarboxylates phenylacetates with a hydroxyl group in the p-position. Active toward 4-hydroxyphenylacetate and 3,4-dihydroxyphenylacetate, forming 4-methylphenol and 4-methylcatechol, respectively. Is likely involved in the catabolism of aromatic amino acids such as tyrosine fermentation. 4-methylphenol (p-cresol) formation provides metabolic toxicity, which allows an active suppression of other microbes and may provide growth advantages for the producers in highly competitive environments. The small subunit is essential for enzymatic activity of HPA decarboxylase, and also seems to be involved in the regulation of the enzyme oligomeric state and catalytic activity. The sequence is that of 4-hydroxyphenylacetate decarboxylase small subunit from Clostridioides difficile (strain 630) (Peptoclostridium difficile).